The sequence spans 371 residues: Peptide chain release factor 2 (371 aa).

Gln247 bears the N5-methylglutamine mark.

It belongs to the prokaryotic/mitochondrial release factor family. Post-translationally, methylated by PrmC. Methylation increases the termination efficiency of RF2.

It is found in the cytoplasm. In terms of biological role, peptide chain release factor 2 directs the termination of translation in response to the peptide chain termination codons UGA and UAA. The protein is Peptide chain release factor 2 of Caulobacter vibrioides (strain ATCC 19089 / CIP 103742 / CB 15) (Caulobacter crescentus).